The chain runs to 492 residues: Aerolysin-3 (492 aa).

An N-terminal signal peptide occupies residues 1–23; the sequence is MKKLKITGLSLIISGLLMAQAQA. 2 disulfide bridges follow: C42-C98 and C182-C187. Residues 68–84 form an interaction with host N-linked glycan region; that stretch reads WQISGLANGWVIMGPGY. The interval 256-288 is part of the transmembrane beta-barrel after proteolytic activation of the toxin and insertion into the host membrane; sequence YGLSEKVTTKNKFKWPLVGETELSIEIAANQSW. Residues 346-355 are interaction with glycans from host GPI-anchor; it reads RWGGNAWYTH. The propeptide occupies 446–492; it reads AAASHSSRARNLSAGQGLRLEIPLDAQELSGLGFNNVSLSVTPAANQ.

It belongs to the aerolysin family. As to quaternary structure, homodimer in solution; homoheptamer in the host membrane. After binding to GPI-anchored proteins in target membranes and proteolytic removal of the C-terminal propeptide, the protein assembles into a heptameric pre-pore complex. A further conformation change leads to insertion into the host membrane. Post-translationally, proteolytic cleavage and subsequent release of the propeptide trigger a major conformation change, leading to the formation of a heptameric pre-pore that then inserts into the host membrane.

The protein resides in the secreted. It is found in the host cell membrane. Functionally, secreted, cytolytic toxin that forms pores in host membranes after proteolytic removal of a C-terminal propeptide, leading to destruction of the membrane permeability barrier and cell death. The pores are formed by transmembrane beta-strands and are approximately 3 nm in diameter. The chain is Aerolysin-3 (ahh3) from Aeromonas hydrophila.